The following is a 734-amino-acid chain: Ribosomal biogenesis protein LAS1L (734 aa).

Residues 204–255 (EGIEEEDQEEDKNIVVDDITEQKPEPQDDGKSTESDVKADGDSKGSEEVDSH) are disordered. Residues 214 to 255 (DKNIVVDDITEQKPEPQDDGKSTESDVKADGDSKGSEEVDSH) show a composition bias toward basic and acidic residues. Residues lysine 215 and lysine 226 each participate in a glycyl lysine isopeptide (Lys-Gly) (interchain with G-Cter in SUMO2) cross-link. A phosphoserine mark is found at serine 441, serine 523, and serine 560. Polar residues predominate over residues 547–561 (GSEAKAQQQEEQGSV). The tract at residues 547 to 619 (GSEAKAQQQE…PFSTGQESPT (73 aa)) is disordered. The segment covering 563–575 (DVKEEEKEEKEVL) has biased composition (basic and acidic residues). A compositionally biased stretch (acidic residues) spans 578 to 605 (QVEEEEENDDQEEEEEDEDDEDDEEEDR). The residue at position 617 (serine 617) is a Phosphoserine. Residues 636–655 (SAWQVSSEDVRWDTFPLGRM) form an interaction with NOL9 region.

It belongs to the LAS1 family. Component of some MLL1/MLL complex, at least composed of the core components KMT2A/MLL1, ASH2L, HCFC1/HCF1, WDR5 and RBBP5, as well as the facultative components BACC1, CHD8, E2F6, HSP70, INO80C, KANSL1, LAS1L, MAX, MCRS1, MGA, KAT8/MOF, PELP1, PHF20, PRP31, RING2, RUVB1/TIP49A, RUVB2/TIP49B, SENP3, TAF1, TAF4, TAF6, TAF7, TAF9 and TEX10. Component of the 5FMC complex, at least composed of PELP1, LAS1L, TEX10, WDR18 and SENP3; the complex interacts with methylated CHTOP and ZNF148. Interacts with NOL9 to form an ITS2 pre-rRNA endonuclease-kinase complex.

The protein resides in the nucleus. It is found in the nucleolus. The protein localises to the nucleoplasm. It localises to the cytoplasm. In terms of biological role, required for the synthesis of the 60S ribosomal subunit and maturation of the 28S rRNA. Functions as a component of the Five Friends of Methylated CHTOP (5FMC) complex; the 5FMC complex is recruited to ZNF148 by methylated CHTOP, leading to desumoylation of ZNF148 and subsequent transactivation of ZNF148 target genes. Required for the efficient pre-rRNA processing at both ends of internal transcribed spacer 2 (ITS2). The chain is Ribosomal biogenesis protein LAS1L (LAS1L) from Homo sapiens (Human).